The primary structure comprises 138 residues: Translation initiation factor 2 subunit beta (138 aa).

The protein belongs to the eIF-2-beta/eIF-5 family. Heterotrimer composed of an alpha, a beta and a gamma chain.

Functionally, eIF-2 functions in the early steps of protein synthesis by forming a ternary complex with GTP and initiator tRNA. The protein is Translation initiation factor 2 subunit beta of Methanococcus vannielii (strain ATCC 35089 / DSM 1224 / JCM 13029 / OCM 148 / SB).